A 242-amino-acid polypeptide reads, in one-letter code: UPF0246 protein SPN23F15130 (242 aa).

Belongs to the UPF0246 family.

This chain is UPF0246 protein SPN23F15130, found in Streptococcus pneumoniae (strain ATCC 700669 / Spain 23F-1).